Here is a 188-residue protein sequence, read N- to C-terminus: GMP synthase [glutamine-hydrolyzing] subunit A (188 aa).

Residues 1–188 (MIVIMDNGGQ…RNFAKLCGEL (188 aa)) form the Glutamine amidotransferase type-1 domain. Catalysis depends on cysteine 78, which acts as the Nucleophile. Residues histidine 165 and glutamate 167 contribute to the active site.

Heterodimer composed of a glutamine amidotransferase subunit (A) and a GMP-binding subunit (B).

The catalysed reaction is XMP + L-glutamine + ATP + H2O = GMP + L-glutamate + AMP + diphosphate + 2 H(+). It functions in the pathway purine metabolism; GMP biosynthesis; GMP from XMP (L-Gln route): step 1/1. Functionally, catalyzes the synthesis of GMP from XMP. In Pyrococcus abyssi (strain GE5 / Orsay), this protein is GMP synthase [glutamine-hydrolyzing] subunit A.